The chain runs to 122 residues: Large ribosomal subunit protein uL14c (122 aa).

It belongs to the universal ribosomal protein uL14 family. In terms of assembly, part of the 50S ribosomal subunit.

Its subcellular location is the plastid. The protein localises to the chloroplast. Binds to 23S rRNA. This Gossypium barbadense (Sea Island cotton) protein is Large ribosomal subunit protein uL14c.